A 91-amino-acid polypeptide reads, in one-letter code: Large ribosomal subunit protein bL31 (91 aa).

A disordered region spans residues 62–91 (RRKYSGTKPQQTAKGKKAAPKSTPKTNKKG).

It belongs to the bacterial ribosomal protein bL31 family. Type A subfamily. As to quaternary structure, part of the 50S ribosomal subunit.

Functionally, binds the 23S rRNA. This is Large ribosomal subunit protein bL31 from Thermosynechococcus vestitus (strain NIES-2133 / IAM M-273 / BP-1).